Reading from the N-terminus, the 204-residue chain is Matrix-remodeling-associated protein 7 (204 aa).

Residues 7-27 (LLAALPALATALALLLAWLLV) traverse the membrane as a helical segment. The disordered stretch occupies residues 32–148 (AASPEPARAP…FSFKYSPGKL (117 aa)). A compositionally biased stretch (pro residues) spans 38 to 47 (ARAPPEPAPP). Over residues 63 to 103 (EPAASPAGPEEPGEPAGLGELGEPAGPGEPEGPGDPAAAPA) the composition is skewed to low complexity. Residues 110–126 (VEARQEEEQDLDGEKGP) are compositionally biased toward basic and acidic residues. Position 191 is a phosphoserine (Ser-191).

The protein resides in the membrane. In Homo sapiens (Human), this protein is Matrix-remodeling-associated protein 7 (MXRA7).